A 161-amino-acid polypeptide reads, in one-letter code: MSQLTHINAAGEAHMVDVSAKAETVREARAEAFVTMRSETLAMIVDGKHHKGDVFATARIAGIQAAKRTWELIPLCHPLLLSKVEIQLQAEPEHNRVRIESLCRLTGKTGVEMEALTAASVAALTIYDMCKAVQKDMVIGPVRLLAKSGGKSGDFKVDAHD.

Substrate contacts are provided by residues 75 to 77 (LCH) and 113 to 114 (ME). The active site involves Asp128.

Belongs to the MoaC family. In terms of assembly, homohexamer; trimer of dimers.

It carries out the reaction (8S)-3',8-cyclo-7,8-dihydroguanosine 5'-triphosphate = cyclic pyranopterin phosphate + diphosphate. It participates in cofactor biosynthesis; molybdopterin biosynthesis. Functionally, catalyzes the conversion of (8S)-3',8-cyclo-7,8-dihydroguanosine 5'-triphosphate to cyclic pyranopterin monophosphate (cPMP). This Salmonella heidelberg (strain SL476) protein is Cyclic pyranopterin monophosphate synthase.